A 209-amino-acid polypeptide reads, in one-letter code: Large ribosomal subunit protein uL4 (209 aa).

Positions 46-71 (GTSSTKTRSEVRGSSKKPWKQKGTGR) are disordered. A compositionally biased stretch (basic residues) spans 59–71 (SSKKPWKQKGTGR).

This sequence belongs to the universal ribosomal protein uL4 family. As to quaternary structure, part of the 50S ribosomal subunit.

Functionally, one of the primary rRNA binding proteins, this protein initially binds near the 5'-end of the 23S rRNA. It is important during the early stages of 50S assembly. It makes multiple contacts with different domains of the 23S rRNA in the assembled 50S subunit and ribosome. In terms of biological role, forms part of the polypeptide exit tunnel. This is Large ribosomal subunit protein uL4 from Borreliella afzelii (strain PKo) (Borrelia afzelii).